Consider the following 447-residue polypeptide: Argininosuccinate lyase (447 aa).

The protein belongs to the lyase 1 family. Argininosuccinate lyase subfamily.

It localises to the cytoplasm. It catalyses the reaction 2-(N(omega)-L-arginino)succinate = fumarate + L-arginine. It functions in the pathway amino-acid biosynthesis; L-arginine biosynthesis; L-arginine from L-ornithine and carbamoyl phosphate: step 3/3. In Bacteroides fragilis (strain ATCC 25285 / DSM 2151 / CCUG 4856 / JCM 11019 / LMG 10263 / NCTC 9343 / Onslow / VPI 2553 / EN-2), this protein is Argininosuccinate lyase.